The following is a 205-amino-acid chain: Probable GTP-binding protein EngB (205 aa).

Positions 22–194 constitute an EngB-type G domain; it reads ELPEIAFAGR…WESILDLCEI (173 aa). Residues 30–37, 57–61, 75–78, 142–145, and 173–175 contribute to the GTP site; these read GRSNVGKS, GRTQL, DLPG, TKAD, and FSA. Mg(2+) is bound by residues Ser37 and Thr59.

Belongs to the TRAFAC class TrmE-Era-EngA-EngB-Septin-like GTPase superfamily. EngB GTPase family. Mg(2+) serves as cofactor.

Its function is as follows. Necessary for normal cell division and for the maintenance of normal septation. The polypeptide is Probable GTP-binding protein EngB (Desulfatibacillum aliphaticivorans).